Consider the following 75-residue polypeptide: Small ribosomal subunit protein bS18 (75 aa).

It belongs to the bacterial ribosomal protein bS18 family. As to quaternary structure, part of the 30S ribosomal subunit. Forms a tight heterodimer with protein bS6.

Binds as a heterodimer with protein bS6 to the central domain of the 16S rRNA, where it helps stabilize the platform of the 30S subunit. In Pseudoalteromonas translucida (strain TAC 125), this protein is Small ribosomal subunit protein bS18.